A 165-amino-acid chain; its full sequence is uncharacterized protein (165 aa).

The helical transmembrane segment at 16–36 (ASISSILNFFFFYIMEYFVAV) threads the bilayer.

The protein belongs to the asfivirus F165R family.

It localises to the host membrane. This is an uncharacterized protein from African swine fever virus (strain Badajoz 1971 Vero-adapted) (Ba71V).